Here is a 101-residue protein sequence, read N- to C-terminus: Iron-sulfur cluster assembly protein CyaY (101 aa).

Belongs to the frataxin family.

Its function is as follows. Involved in iron-sulfur (Fe-S) cluster assembly. May act as a regulator of Fe-S biogenesis. This Rickettsia felis (strain ATCC VR-1525 / URRWXCal2) (Rickettsia azadi) protein is Iron-sulfur cluster assembly protein CyaY.